A 153-amino-acid polypeptide reads, in one-letter code: Large-conductance mechanosensitive channel (153 aa).

The next 2 helical transmembrane spans lie at 16–36 (VIDL…VKSL) and 88–108 (GLFI…FMLV).

It belongs to the MscL family. As to quaternary structure, homopentamer.

The protein resides in the cell inner membrane. In terms of biological role, channel that opens in response to stretch forces in the membrane lipid bilayer. May participate in the regulation of osmotic pressure changes within the cell. The sequence is that of Large-conductance mechanosensitive channel from Chromobacterium violaceum (strain ATCC 12472 / DSM 30191 / JCM 1249 / CCUG 213 / NBRC 12614 / NCIMB 9131 / NCTC 9757 / MK).